A 191-amino-acid chain; its full sequence is GDP-mannose pyrophosphatase (191 aa).

Residues tyrosine 17, 38–40, arginine 67, and 85–87 each bind GDP-alpha-D-mannose; these read KRE and AGL. A Nudix hydrolase domain is found at 43 to 180; sequence DRGNGATILL…EIRDGKTVLL (138 aa). Residues alanine 85, glutamate 100, and glutamate 104 each contribute to the Mg(2+) site. The Nudix box motif lies at 86–106; sequence GLLDNDEPEVCIRKEAIEETG. Residues glutamate 104, glutamate 127, 150–151, and lysine 176 each bind GDP-alpha-D-mannose; that span reads DE. Position 151 (glutamate 151) interacts with Mg(2+).

The protein belongs to the Nudix hydrolase family. NudK subfamily. Homodimer. The cofactor is Mg(2+).

It catalyses the reaction GDP-alpha-D-mannose + H2O = alpha-D-mannose 1-phosphate + GMP + 2 H(+). Functionally, nucleoside diphosphate sugar hydrolase that hydrolyzes GDP-mannose as its preferred substrate, yielding GMP and mannose-1-phosphate. The protein is GDP-mannose pyrophosphatase (nudK) of Shigella boydii serotype 4 (strain Sb227).